The chain runs to 535 residues: CTP synthase (535 aa).

Residues M1–L267 are amidoligase domain. Position 13 (S13) interacts with CTP. S13 is a UTP binding site. Position 14 to 19 (S14 to I19) interacts with ATP. Y54 serves as a coordination point for L-glutamine. D71 serves as a coordination point for ATP. Mg(2+) is bound by residues D71 and E141. Residues D148–E150, K188–Q193, and K224 each bind CTP. UTP contacts are provided by residues K188 to Q193 and K224. R240–A242 serves as a coordination point for ATP. The Glutamine amidotransferase type-1 domain occupies K292–S534. Position 354 (G354) interacts with L-glutamine. The Nucleophile; for glutamine hydrolysis role is filled by C381. L-glutamine contacts are provided by residues L382–Q385, E405, and R462. Catalysis depends on residues H507 and E509.

This sequence belongs to the CTP synthase family. As to quaternary structure, homotetramer.

The enzyme catalyses UTP + L-glutamine + ATP + H2O = CTP + L-glutamate + ADP + phosphate + 2 H(+). It carries out the reaction L-glutamine + H2O = L-glutamate + NH4(+). The catalysed reaction is UTP + NH4(+) + ATP = CTP + ADP + phosphate + 2 H(+). The protein operates within pyrimidine metabolism; CTP biosynthesis via de novo pathway; CTP from UDP: step 2/2. Allosterically activated by GTP, when glutamine is the substrate; GTP has no effect on the reaction when ammonia is the substrate. The allosteric effector GTP functions by stabilizing the protein conformation that binds the tetrahedral intermediate(s) formed during glutamine hydrolysis. Inhibited by the product CTP, via allosteric rather than competitive inhibition. Functionally, catalyzes the ATP-dependent amination of UTP to CTP with either L-glutamine or ammonia as the source of nitrogen. Regulates intracellular CTP levels through interactions with the four ribonucleotide triphosphates. In Bacillus cereus (strain G9842), this protein is CTP synthase.